The following is a 132-amino-acid chain: Small ribosomal subunit protein uS11 (132 aa).

The protein belongs to the universal ribosomal protein uS11 family. As to quaternary structure, part of the 30S ribosomal subunit. Interacts with proteins S7 and S18. Binds to IF-3.

In terms of biological role, located on the platform of the 30S subunit, it bridges several disparate RNA helices of the 16S rRNA. Forms part of the Shine-Dalgarno cleft in the 70S ribosome. The protein is Small ribosomal subunit protein uS11 of Oenococcus oeni (strain ATCC BAA-331 / PSU-1).